The chain runs to 519 residues: MCGGQRPLFLLPLLAVCLGAKGRNQEERLLGDLMQGYNPHLRPAEHDSDVVNVSLKLTLTNLISLNEREEALTTNVWIEMQWCDYRLRWDPRDYGGLWVLRVPSTMVWRPDIVLENNVDGVFEVALYCNVLVSPDGCVYWLPPAIFRSSCPVSVTFFPFDWQNCSLIFQSQTYSTNEINLQLSQEDGQTIEWIFIDPEAFTENGEWAIRHRPAKMLLDEAAPAEEAGHQKVVFYLLIQRKPLFYVINIIAPCVLISSVAILIYFLPAKAGGQKCTVAINVLLAQTVFLFLVAKKVPETSQAVPLISKYLTFLLVVTILIVVNAVVVLNVSLRSPHTHSMARGVRKVFLRLLPQLLRMHVRPLAPVAVQDAHPRLQNGSSSGWPITAGEEVALCLPRSELLFRQRQRNGLVRAALEKLEKGPESGQSPEWCGSLKQAAPAIQACVEACNLIARARHQQTHFDSGNKEWFLVGRVLDRVCFLAMLSLFVCGTAGIFLMAHYNRVPALPFPGDPRSYLPSSD.

Positions 1 to 22 (MCGGQRPLFLLPLLAVCLGAKG) are cleaved as a signal peptide. The Extracellular segment spans residues 23–240 (RNQEERLLGD…VVFYLLIQRK (218 aa)). 2 N-linked (GlcNAc...) asparagine glycosylation sites follow: asparagine 52 and asparagine 163. A disulfide bridge connects residues cysteine 150 and cysteine 164. Helical transmembrane passes span 241–265 (PLFY…IYFL), 274–292 (CTVA…FLVA), and 308–329 (YLTF…VLNV). The Cytoplasmic segment spans residues 330 to 476 (SLRSPHTHSM…WFLVGRVLDR (147 aa)). The chain crosses the membrane as a helical span at residues 477–497 (VCFLAMLSLFVCGTAGIFLMA).

Belongs to the ligand-gated ion channel (TC 1.A.9) family. Acetylcholine receptor (TC 1.A.9.1) subfamily. Gamma/CHRNG sub-subfamily. Pentamer of two alpha chains, and one each of the beta, delta, and gamma (in immature muscle) or epsilon (in mature muscle) chains.

The protein localises to the postsynaptic cell membrane. The protein resides in the cell membrane. It carries out the reaction K(+)(in) = K(+)(out). The catalysed reaction is Na(+)(in) = Na(+)(out). In terms of biological role, after binding acetylcholine, the AChR responds by an extensive change in conformation that affects all subunits and leads to opening of an ion-conducting channel across the plasma membrane. The protein is Acetylcholine receptor subunit gamma (CHRNG) of Bos taurus (Bovine).